Consider the following 735-residue polypeptide: Polyribonucleotide nucleotidyltransferase (735 aa).

Mg(2+) is bound by residues aspartate 515 and aspartate 521. The KH domain occupies proline 581 to isoleucine 641. The interval asparagine 649–threonine 671 is disordered. Residues glycine 675–valine 734 enclose the S1 motif domain.

This sequence belongs to the polyribonucleotide nucleotidyltransferase family. Mg(2+) serves as cofactor.

Its subcellular location is the cytoplasm. It catalyses the reaction RNA(n+1) + phosphate = RNA(n) + a ribonucleoside 5'-diphosphate. Its function is as follows. Involved in mRNA degradation. Catalyzes the phosphorolysis of single-stranded polyribonucleotides processively in the 3'- to 5'-direction. This Campylobacter curvus (strain 525.92) protein is Polyribonucleotide nucleotidyltransferase.